Reading from the N-terminus, the 410-residue chain is Lissencephaly-1 homolog (410 aa).

Residues 7 to 39 (QQEELQLAVHAYLVEAGHAEAAAAMAKSANLGD) enclose the LisH domain. Residues 55-80 (TTITRLQKRNMELQAEVEELRSSARA) adopt a coiled-coil conformation. WD repeat units lie at residues 104–143 (GHRL…FERS), 146–185 (GHTN…CTKT), 188–227 (GHDH…CLQT), 230–269 (GHSD…CKHV), 294–333 (MIFG…HLAR), 336–375 (GHDN…VSKT), and 378–410 (AHNH…WECN).

It belongs to the WD repeat LIS1/nudF family.

It localises to the cytoplasm. Its subcellular location is the cytoskeleton. It is found in the microtubule organizing center. The protein localises to the centrosome. Its function is as follows. Positively regulates the activity of the minus-end directed microtubule motor protein dynein. May enhance dynein-mediated microtubule sliding by targeting dynein to the microtubule plus end. Required for several dynein- and microtubule-dependent processes. The polypeptide is Lissencephaly-1 homolog (Monosiga brevicollis (Choanoflagellate)).